Reading from the N-terminus, the 510-residue chain is Glycerol kinase (510 aa).

Thr-13 contacts ADP. The ATP site is built by Thr-13 and Thr-14. Thr-13 is a sn-glycerol 3-phosphate binding site. Arg-17 is a binding site for ADP. Residues Arg-83, Glu-84, Tyr-135, and Asp-255 each coordinate sn-glycerol 3-phosphate. Residues Arg-83, Glu-84, Tyr-135, Asp-255, and Gln-256 each coordinate glycerol. ADP is bound by residues Thr-277, Gly-321, Gly-421, and Asn-425. Positions 277, 321, and 421 each coordinate ATP.

It belongs to the FGGY kinase family.

The catalysed reaction is glycerol + ATP = sn-glycerol 3-phosphate + ADP + H(+). Its pathway is polyol metabolism; glycerol degradation via glycerol kinase pathway; sn-glycerol 3-phosphate from glycerol: step 1/1. In terms of biological role, key enzyme in the regulation of glycerol uptake and metabolism. Catalyzes the phosphorylation of glycerol to yield sn-glycerol 3-phosphate. This Haloarcula marismortui (strain ATCC 43049 / DSM 3752 / JCM 8966 / VKM B-1809) (Halobacterium marismortui) protein is Glycerol kinase.